The sequence spans 270 residues: Type III pantothenate kinase (270 aa).

6-13 (DAGNTNIV) is a binding site for ATP. 107 to 110 (GADR) is a substrate binding site. The active-site Proton acceptor is Asp-109. Residue Asp-129 coordinates K(+). Thr-132 lines the ATP pocket. Residue Thr-184 coordinates substrate.

It belongs to the type III pantothenate kinase family. In terms of assembly, homodimer. NH4(+) serves as cofactor. It depends on K(+) as a cofactor.

Its subcellular location is the cytoplasm. It carries out the reaction (R)-pantothenate + ATP = (R)-4'-phosphopantothenate + ADP + H(+). Its pathway is cofactor biosynthesis; coenzyme A biosynthesis; CoA from (R)-pantothenate: step 1/5. In terms of biological role, catalyzes the phosphorylation of pantothenate (Pan), the first step in CoA biosynthesis. In Gluconobacter oxydans (strain 621H) (Gluconobacter suboxydans), this protein is Type III pantothenate kinase.